The chain runs to 108 residues: PTS system cellobiose-specific EIIB component (108 aa).

The PTS EIIB type-3 domain occupies 3–108 (DKVIALACAA…VLAAAENLMN (106 aa)). Cysteine 10 acts as the Phosphocysteine intermediate in catalysis. Cysteine 10 is subject to Phosphocysteine; by EIIA.

It catalyses the reaction D-cellobiose(out) + N(pros)-phospho-L-histidyl-[protein] = 6-phospho-beta-D-glucosyl-(1-&gt;4)-D-glucose(in) + L-histidyl-[protein]. In terms of biological role, the phosphoenolpyruvate-dependent sugar phosphotransferase system (sugar PTS), a major carbohydrate active transport system, catalyzes the phosphorylation of incoming sugar substrates concomitantly with their translocation across the cell membrane. Involved in cellobiose transport with PtcA and CelB. This system can also transport lactose. In Lactococcus lactis subsp. lactis (strain IL1403) (Streptococcus lactis), this protein is PTS system cellobiose-specific EIIB component.